A 95-amino-acid polypeptide reads, in one-letter code: Small ribosomal subunit protein bS18 (95 aa).

The protein belongs to the bacterial ribosomal protein bS18 family. Part of the 30S ribosomal subunit. Forms a tight heterodimer with protein bS6.

In terms of biological role, binds as a heterodimer with protein bS6 to the central domain of the 16S rRNA, where it helps stabilize the platform of the 30S subunit. The sequence is that of Small ribosomal subunit protein bS18 from Rickettsia canadensis (strain McKiel).